The following is a 190-amino-acid chain: N-alpha-acetyltransferase MAK3 (190 aa).

An N-acetyltransferase domain is found at 16 to 164; the sequence is IEYTSYAGEH…DAFRLKLLFP (149 aa).

Belongs to the acetyltransferase family. MAK3 subfamily. Expressed in roots, leaves, flowers and siliques.

It localises to the cytoplasm. It catalyses the reaction N-terminal L-methionyl-L-leucyl-[protein] + acetyl-CoA = N-terminal N(alpha)-acetyl-L-methionyl-L-leucyl-[protein] + CoA + H(+). The catalysed reaction is N-terminal L-methionyl-L-isoleucyl-[protein] + acetyl-CoA = N-terminal N(alpha)-acetyl-L-methionyl-L-isoleucyl-[protein] + CoA + H(+). The enzyme catalyses N-terminal L-methionyl-L-phenylalanyl-[protein] + acetyl-CoA = N-terminal N(alpha)-acetyl-L-methionyl-L-phenylalanyl-[protein] + CoA + H(+). It carries out the reaction N-terminal L-methionyl-L-tryptophyl-[protein] + acetyl-CoA = N-terminal N(alpha)-acetyl-L-methionyl-L-tryptophyl-[protein] + CoA + H(+). It catalyses the reaction N-terminal L-methionyl-L-tyrosyl-[protein] + acetyl-CoA = N-terminal N(alpha)-acetyl-L-methionyl-L-tyrosyl-[protein] + CoA + H(+). In terms of biological role, probably required for N-acetylation of some chloroplast precursor proteins and efficient accumulation of thylakoid multiprotein complexes. In yeast, can replace the NatC complex (composed of MAK3, MAK10 and MAK31) by acetylating N termini of endogenous proteins and the N-terminus Met of L-A virus Gag protein. However, the formation of a NatC complex is not required for this function. This is N-alpha-acetyltransferase MAK3 (MAK3) from Arabidopsis thaliana (Mouse-ear cress).